Here is a 208-residue protein sequence, read N- to C-terminus: Superoxide dismutase [Mn] 2 (208 aa).

Positions 28, 83, 165, and 169 each coordinate Mn(2+).

This sequence belongs to the iron/manganese superoxide dismutase family. As to quaternary structure, homodimer. Requires Mn(2+) as cofactor.

It carries out the reaction 2 superoxide + 2 H(+) = H2O2 + O2. In terms of biological role, destroys superoxide anion radicals which are normally produced within the cells and which are toxic to biological systems. The polypeptide is Superoxide dismutase [Mn] 2 (sodA2) (Bacillus cereus (strain ATCC 14579 / DSM 31 / CCUG 7414 / JCM 2152 / NBRC 15305 / NCIMB 9373 / NCTC 2599 / NRRL B-3711)).